A 117-amino-acid polypeptide reads, in one-letter code: Hydrogenase maturation factor HypA (117 aa).

A Ni(2+)-binding site is contributed by histidine 2. 4 residues coordinate Zn(2+): cysteine 73, cysteine 76, cysteine 90, and cysteine 93.

This sequence belongs to the HypA/HybF family.

Functionally, involved in the maturation of [NiFe] hydrogenases. Required for nickel insertion into the metal center of the hydrogenase. This is Hydrogenase maturation factor HypA from Pectobacterium atrosepticum (strain SCRI 1043 / ATCC BAA-672) (Erwinia carotovora subsp. atroseptica).